Reading from the N-terminus, the 311-residue chain is Large ribosomal subunit protein uL18 (311 aa).

Belongs to the universal ribosomal protein uL18 family. In terms of assembly, component of the large ribosomal subunit (LSU).

It localises to the cytoplasm. The protein resides in the nucleus. In terms of biological role, component of the ribosome, a large ribonucleoprotein complex responsible for the synthesis of proteins in the cell. The small ribosomal subunit (SSU) binds messenger RNAs (mRNAs) and translates the encoded message by selecting cognate aminoacyl-transfer RNA (tRNA) molecules. The large subunit (LSU) contains the ribosomal catalytic site termed the peptidyl transferase center (PTC), which catalyzes the formation of peptide bonds, thereby polymerizing the amino acids delivered by tRNAs into a polypeptide chain. The nascent polypeptides leave the ribosome through a tunnel in the LSU and interact with protein factors that function in enzymatic processing, targeting, and the membrane insertion of nascent chains at the exit of the ribosomal tunnel. The protein is Large ribosomal subunit protein uL18 (RPL5) of Eimeria tenella (Coccidian parasite).